We begin with the raw amino-acid sequence, 874 residues long: Alanine--tRNA ligase (874 aa).

The Zn(2+) site is built by H563, H567, C665, and H669.

Belongs to the class-II aminoacyl-tRNA synthetase family. The cofactor is Zn(2+).

It is found in the cytoplasm. The enzyme catalyses tRNA(Ala) + L-alanine + ATP = L-alanyl-tRNA(Ala) + AMP + diphosphate. Functionally, catalyzes the attachment of alanine to tRNA(Ala) in a two-step reaction: alanine is first activated by ATP to form Ala-AMP and then transferred to the acceptor end of tRNA(Ala). Also edits incorrectly charged Ser-tRNA(Ala) and Gly-tRNA(Ala) via its editing domain. This chain is Alanine--tRNA ligase, found in Actinobacillus pleuropneumoniae serotype 5b (strain L20).